The sequence spans 269 residues: Shikimate dehydrogenase (NADP(+)) (269 aa).

Shikimate-binding positions include 19–21 (SLS) and Thr-66. The Proton acceptor role is filled by Lys-70. Asp-82 is a binding site for NADP(+). Shikimate is bound by residues Asn-91 and Asp-106. Residues 130 to 134 (GAGGA), 153 to 158 (NRTKEK), and Ile-214 each bind NADP(+). Tyr-216 provides a ligand contact to shikimate. Gly-235 provides a ligand contact to NADP(+). Gln-242 lines the shikimate pocket.

Belongs to the shikimate dehydrogenase family. Homodimer.

It carries out the reaction shikimate + NADP(+) = 3-dehydroshikimate + NADPH + H(+). It participates in metabolic intermediate biosynthesis; chorismate biosynthesis; chorismate from D-erythrose 4-phosphate and phosphoenolpyruvate: step 4/7. Involved in the biosynthesis of the chorismate, which leads to the biosynthesis of aromatic amino acids. Catalyzes the reversible NADPH linked reduction of 3-dehydroshikimate (DHSA) to yield shikimate (SA). This is Shikimate dehydrogenase (NADP(+)) from Aquifex aeolicus (strain VF5).